The sequence spans 442 residues: Proline--tRNA ligase (442 aa).

The protein belongs to the class-II aminoacyl-tRNA synthetase family. ProS type 2 subfamily. In terms of assembly, homodimer.

The protein resides in the cytoplasm. The catalysed reaction is tRNA(Pro) + L-proline + ATP = L-prolyl-tRNA(Pro) + AMP + diphosphate. Its function is as follows. Catalyzes the attachment of proline to tRNA(Pro) in a two-step reaction: proline is first activated by ATP to form Pro-AMP and then transferred to the acceptor end of tRNA(Pro). In Rhizobium meliloti (strain 1021) (Ensifer meliloti), this protein is Proline--tRNA ligase.